Consider the following 434-residue polypeptide: MVNTSEENNSNAVMPRKFQGGMNQVGHGGGRIVGQNRRALGGINQNFVHGRPYPCVVHKRVLSEKHEICEKKQADLGHRPITRRFAAKIAGSQQSYAEKTKNSNPLNLNEFGNSIAIDDELKSPEDQPEPMTLEHTEPMHSDPLEMEEVEMEDIEGEMILDIDSCDANNSLAVVEYIEDLHAYYRKIEYLGCVSPTYMDEQLDLNERMRAILVDWLIEVHDKFDLMQETLFLTVNLIDRFLAKQNVVRKKLQLVGLVAMLLACKYEEVSVPVVSDLIHIADRAYTRKDILEMEKLMLNTLQYNMSLPTAYVFMRRFLKAAQADKKLELVAFFLVDLSLVEYEMLKFPPSLVAAAAVYTAQCTVSGFKHWNKTCEWHTNYSEDQLLECSMLMVGFHQKAGAGKLTGVHRKYGSAKFSFTAKCEPACFLLENKNQP.

This sequence belongs to the cyclin family. Cyclin AB subfamily. As to quaternary structure, interacts with the CDC2 protein kinase to form a serine/threonine kinase holoenzyme complex also known as maturation promoting factor (MPF). The cyclin subunit imparts substrate specificity to the complex.

Functionally, essential for the control of the cell cycle at the G2/M (mitosis) transition. This Medicago sativa subsp. varia (Alfalfa) protein is G2/mitotic-specific cyclin-2.